The following is a 340-amino-acid chain: MKERINQLLQEIGQCVAATVEEAEALRIKYLSKKGEIARLFDDFRLVPSEEKKQIGQMLNELKNKAQEHINSLRERAQAGSAQASAETDLTRTSYPTRLGTRHPISLVKQEICEIFARLGFSIADGPEIEDDWHVFSSMNFAEDHPARDMQDTFFIEHRPDVILRTHTSSVQSRVMEKTQPPIRVICPGRTYRNEAISYRAHCFFHQVEALYVDKDVSFADLRQVLLYFAQEMFGAETKIRLRPSYFPFTEPSAEMDISCNICGGKGCNFCKHTGWVEILGCGMVDPNVLDNCGIDSKKYSGYALGMGIERITNLKYRVKDLRFFSENDLNFLEQFKSVH.

Position 251 (Glu-251) interacts with Mg(2+).

This sequence belongs to the class-II aminoacyl-tRNA synthetase family. Phe-tRNA synthetase alpha subunit type 1 subfamily. As to quaternary structure, tetramer of two alpha and two beta subunits. It depends on Mg(2+) as a cofactor.

It is found in the cytoplasm. The enzyme catalyses tRNA(Phe) + L-phenylalanine + ATP = L-phenylalanyl-tRNA(Phe) + AMP + diphosphate + H(+). The protein is Phenylalanine--tRNA ligase alpha subunit of Porphyromonas gingivalis (strain ATCC 33277 / DSM 20709 / CIP 103683 / JCM 12257 / NCTC 11834 / 2561).